Reading from the N-terminus, the 266-residue chain is Uracil-DNA glycosylase (266 aa).

The segment at 1 to 25 (MTRRADPAQATLFDDDEPAGAPTAT) is disordered. D97 serves as the catalytic Proton acceptor.

The protein belongs to the uracil-DNA glycosylase (UDG) superfamily. UNG family.

The protein resides in the cytoplasm. The enzyme catalyses Hydrolyzes single-stranded DNA or mismatched double-stranded DNA and polynucleotides, releasing free uracil.. Its function is as follows. Excises uracil residues from the DNA which can arise as a result of misincorporation of dUMP residues by DNA polymerase or due to deamination of cytosine. This is Uracil-DNA glycosylase from Ralstonia nicotianae (strain ATCC BAA-1114 / GMI1000) (Ralstonia solanacearum).